The chain runs to 191 residues: Adenylate kinase (191 aa).

12-17 serves as a coordination point for ATP; it reads GSGKTT. The interval 34–63 is NMP; sequence STGDLLRAESAKKTERGLLIEKFTSQGELV. AMP-binding positions include threonine 35, arginine 40, 61 to 63, 88 to 91, and glutamine 95; these read ELV and GYPR. Residues 130–136 are LID; sequence GRSRGAD. Residue arginine 131 coordinates ATP. Residues arginine 133 and arginine 145 each coordinate AMP. Arginine 173 lines the ATP pocket.

Belongs to the adenylate kinase family. As to quaternary structure, monomer.

It localises to the cytoplasm. The enzyme catalyses AMP + ATP = 2 ADP. The protein operates within purine metabolism; AMP biosynthesis via salvage pathway; AMP from ADP: step 1/1. Functionally, catalyzes the reversible transfer of the terminal phosphate group between ATP and AMP. Plays an important role in cellular energy homeostasis and in adenine nucleotide metabolism. The sequence is that of Adenylate kinase from Helicobacter pylori (strain G27).